The following is a 386-amino-acid chain: Patatin-T5 (386 aa).

The first 23 residues, 1–23, serve as a signal peptide directing secretion; the sequence is MATTNSFTILIFMILATTSSTFA. Residues 32–229 form the PNPLA domain; it reads LSIDGGGIKG…TVDDPALLSI (198 aa). The GXGXXG motif lies at 36-41; it reads GGGIKG. A glycan (N-linked (GlcNAc...) asparagine) is linked at asparagine 60. The short motif at 75-79 is the GXSXG element; it reads GTSTG. The Nucleophile role is filled by serine 77. Residues asparagine 90 and asparagine 202 are each glycosylated (N-linked (GlcNAc...) asparagine). Aspartate 215 functions as the Proton acceptor in the catalytic mechanism. The DGA/G motif lies at 215-217; that stretch reads DGA.

It belongs to the patatin family. Post-translationally, N-glycosylated. In terms of tissue distribution, tuber and stolon.

Its subcellular location is the vacuole. Its function is as follows. Probable lipolytic acyl hydrolase (LAH), an activity which is thought to be involved in the response of tubers to pathogens. In Solanum tuberosum (Potato), this protein is Patatin-T5.